The chain runs to 74 residues: Omega-conotoxin-like protein 1 (74 aa).

The first 20 residues, 1 to 20 (MSKFILLVCILLLTTNIVSA), serve as a signal peptide directing secretion. Cystine bridges form between Cys24–Cys38, Cys31–Cys43, and Cys37–Cys50.

In terms of tissue distribution, highly expressed in brain. Is also found in hemolymph.

In terms of biological role, the impact of this protein on the neuronal activity of the honeybee brain is not known. It does not affect apparent movement or hatching of blowfly larvae. However, when injected into fish, it induces a strong reversible paralytic effect. In addition, the presence of this small peptide in the hemolymph of adult drones together with its induction after bacterial infection suggests that this peptide exhibits antibacterial activity. This peptide may act by inhibiting ion channels. The sequence is that of Omega-conotoxin-like protein 1 from Apis mellifera (Honeybee).